Reading from the N-terminus, the 220-residue chain is Cytidylate kinase (220 aa).

10–18 (GPASSGKST) is a binding site for ATP.

The protein belongs to the cytidylate kinase family. Type 1 subfamily.

The protein resides in the cytoplasm. It catalyses the reaction CMP + ATP = CDP + ADP. The enzyme catalyses dCMP + ATP = dCDP + ADP. This chain is Cytidylate kinase, found in Lactococcus lactis subsp. cremoris (strain MG1363).